The sequence spans 343 residues: Ornithine carbamoyltransferase, catabolic (343 aa).

62 to 65 is a carbamoyl phosphate binding site; the sequence is STRT. A Ni(2+)-binding site is contributed by histidine 79. Residues glutamine 89, arginine 113, and 140-143 contribute to the carbamoyl phosphate site; that span reads HPTQ. L-ornithine-binding positions include asparagine 172, aspartate 236, and 240–241; that span reads SM. Carbamoyl phosphate-binding positions include 278–279 and arginine 323; that span reads CL.

This sequence belongs to the aspartate/ornithine carbamoyltransferase superfamily. OTCase family. As to quaternary structure, homohexamer; dimer of trimers. Ni(2+) is required as a cofactor.

Its subcellular location is the cytoplasm. The enzyme catalyses carbamoyl phosphate + L-ornithine = L-citrulline + phosphate + H(+). It functions in the pathway amino-acid degradation; L-arginine degradation via ADI pathway; carbamoyl phosphate from L-arginine: step 2/2. In terms of biological role, involved in the catabolism of arginine. Catalyzes the phosphorolysis of citrulline, the reverse reaction of the biosynthetic one, yielding ornithine and carbamoyl phosphate which serve to generate ATP from ADP. This chain is Ornithine carbamoyltransferase, catabolic, found in Lentilactobacillus hilgardii (Lactobacillus hilgardii).